A 422-amino-acid chain; its full sequence is Hispidin-3-hydroxylase (422 aa).

A helical transmembrane segment spans residues 6 to 26 (NSLSVLIVGAGLGGLAAAIAL). FAD-binding residues include Ala-50, Arg-108, and Asp-318.

This sequence belongs to the paxM FAD-dependent monooxygenase family. As to quaternary structure, monomer. FAD is required as a cofactor.

The protein localises to the membrane. It catalyses the reaction hispidin + NADH + O2 + H(+) = 3-hydroxyhispidin + NAD(+) + H2O. The enzyme catalyses hispidin + NADPH + O2 + H(+) = 3-hydroxyhispidin + NADP(+) + H2O. Its pathway is secondary metabolite biosynthesis. Its function is as follows. Hispidin-3-hydroxylase; part of the gene cluster that mediates the fungal bioluminescence cycle. Hydroxylates hispidin in order to produce the fungal luciferin 3-hydroxyhispidin. The fungal bioluminescence cycle begins with the hispidin synthetase that catalyzes the formation of hispidin which is further hydroxylated by the hispidin-3-hydroxylase, yielding the fungal luciferin 3-hydroxyhispidin. The luciferase then produces an endoperoxide as a high-energy intermediate with decomposition that yields oxyluciferin (also known as caffeoylpyruvate) and light emission. Oxyluciferin can be recycled to caffeic acid by caffeoylpyruvate hydrolase. The chain is Hispidin-3-hydroxylase from Neonothopanus nambi (Agaricus nambi).